The following is a 227-amino-acid chain: UMP-CMP kinase (227 aa).

Gly-35 to Thr-40 provides a ligand contact to ATP. An NMP region spans residues Ser-55 to Val-85. A ribonucleoside 5'-phosphate is bound by residues Arg-61, Ser-83 to Val-85, Gly-122 to Arg-125, and Gln-129. Residues Glu-159–Asp-169 form an LID region. Position 160 (Arg-160) interacts with ATP. Arg-166 and Arg-177 together coordinate a ribonucleoside 5'-phosphate. Val-205 contacts ATP.

Belongs to the adenylate kinase family. UMP-CMP kinase subfamily. As to quaternary structure, monomer. It depends on Mg(2+) as a cofactor.

The protein resides in the cytoplasm. It localises to the nucleus. The catalysed reaction is UMP + ATP = UDP + ADP. Its function is as follows. Catalyzes the phosphorylation of pyrimidine nucleoside monophosphates at the expense of ATP. Plays an important role in de novo pyrimidine nucleotide biosynthesis. Has preference for UMP and CMP as phosphate acceptors, but can also use AMP and dCMP to a lesser extent. May play a role during the formation of basidiospores in the gill tissue. The polypeptide is UMP-CMP kinase (uck1) (Lentinula edodes (Shiitake mushroom)).